The primary structure comprises 431 residues: Serine hydroxymethyltransferase (431 aa).

(6S)-5,6,7,8-tetrahydrofolate is bound by residues leucine 128 and 132 to 134 (GHL). The residue at position 237 (lysine 237) is an N6-(pyridoxal phosphate)lysine. Glutamate 253 is a (6S)-5,6,7,8-tetrahydrofolate binding site.

The protein belongs to the SHMT family. Homodimer. The cofactor is pyridoxal 5'-phosphate.

The protein localises to the cytoplasm. It carries out the reaction (6R)-5,10-methylene-5,6,7,8-tetrahydrofolate + glycine + H2O = (6S)-5,6,7,8-tetrahydrofolate + L-serine. The protein operates within one-carbon metabolism; tetrahydrofolate interconversion. Its pathway is amino-acid biosynthesis; glycine biosynthesis; glycine from L-serine: step 1/1. Functionally, catalyzes the reversible interconversion of serine and glycine with tetrahydrofolate (THF) serving as the one-carbon carrier. This reaction serves as the major source of one-carbon groups required for the biosynthesis of purines, thymidylate, methionine, and other important biomolecules. Also exhibits THF-independent aldolase activity toward beta-hydroxyamino acids, producing glycine and aldehydes, via a retro-aldol mechanism. In Cereibacter sphaeroides (strain ATCC 17023 / DSM 158 / JCM 6121 / CCUG 31486 / LMG 2827 / NBRC 12203 / NCIMB 8253 / ATH 2.4.1.) (Rhodobacter sphaeroides), this protein is Serine hydroxymethyltransferase.